The sequence spans 347 residues: GTPase Obg (347 aa).

An Obg domain is found at 1-159 (MHFIDQAEIE…VRLRLELKLI (159 aa)). Positions 160 to 328 (AEVGIVGLPN…LLQRVWQCLG (169 aa)) constitute an OBG-type G domain. GTP is bound by residues 166 to 173 (GLPNAGKS), 191 to 195 (FTTLQ), 213 to 216 (DIPG), 280 to 283 (NKID), and 309 to 311 (SAI). Residues serine 173 and threonine 193 each coordinate Mg(2+).

This sequence belongs to the TRAFAC class OBG-HflX-like GTPase superfamily. OBG GTPase family. As to quaternary structure, monomer. Mg(2+) is required as a cofactor.

Its subcellular location is the cytoplasm. In terms of biological role, an essential GTPase which binds GTP, GDP and possibly (p)ppGpp with moderate affinity, with high nucleotide exchange rates and a fairly low GTP hydrolysis rate. Plays a role in control of the cell cycle, stress response, ribosome biogenesis and in those bacteria that undergo differentiation, in morphogenesis control. This Synechococcus sp. (strain JA-2-3B'a(2-13)) (Cyanobacteria bacterium Yellowstone B-Prime) protein is GTPase Obg.